The chain runs to 1538 residues: Ferredoxin-dependent glutamate synthase (1538 aa).

Residue Cys34 is the For GATase activity of the active site. The Glutamine amidotransferase type-2 domain maps to Cys34–Phe431. Residue Leu1109 to Arg1166 participates in FMN binding. Residues Cys1162, Cys1168, and Cys1173 each contribute to the [3Fe-4S] cluster site.

This sequence belongs to the glutamate synthase family. As to quaternary structure, monomer. It depends on [3Fe-4S] cluster as a cofactor. FAD is required as a cofactor. The cofactor is FMN.

The protein localises to the plastid. It localises to the chloroplast stroma. It carries out the reaction 2 oxidized [2Fe-2S]-[ferredoxin] + 2 L-glutamate = L-glutamine + 2 reduced [2Fe-2S]-[ferredoxin] + 2-oxoglutarate + 2 H(+). Its pathway is amino-acid biosynthesis; L-glutamate biosynthesis via GLT pathway; L-glutamate from 2-oxoglutarate and L-glutamine (ferredoxin route): step 1/1. It participates in energy metabolism; nitrogen metabolism. The chain is Ferredoxin-dependent glutamate synthase (gltB) from Pyropia yezoensis (Susabi-nori).